The chain runs to 173 residues: Transcriptional repressor NrdR (173 aa).

A zinc finger spans residues 3–34; the sequence is CPYCGSLDTQVKDSRPTEDNTAIRRRRVCPDC. Residues 49-139 enclose the ATP-cone domain; that stretch reads LMVVKRSGRR…VYRNFREARD (91 aa).

It belongs to the NrdR family. Zn(2+) is required as a cofactor.

Negatively regulates transcription of bacterial ribonucleotide reductase nrd genes and operons by binding to NrdR-boxes. This chain is Transcriptional repressor NrdR, found in Azorhizobium caulinodans (strain ATCC 43989 / DSM 5975 / JCM 20966 / LMG 6465 / NBRC 14845 / NCIMB 13405 / ORS 571).